We begin with the raw amino-acid sequence, 328 residues long: Malate dehydrogenase (328 aa).

12-18 (GAAGQIG) provides a ligand contact to NAD(+). Positions 95 and 101 each coordinate substrate. Residues asparagine 108, glutamine 115, and 132-134 (VGN) each bind NAD(+). Substrate is bound by residues asparagine 134 and arginine 165. Catalysis depends on histidine 190, which acts as the Proton acceptor.

Belongs to the LDH/MDH superfamily. MDH type 2 family.

It catalyses the reaction (S)-malate + NAD(+) = oxaloacetate + NADH + H(+). Catalyzes the reversible oxidation of malate to oxaloacetate. This is Malate dehydrogenase from Acidovorax ebreus (strain TPSY) (Diaphorobacter sp. (strain TPSY)).